We begin with the raw amino-acid sequence, 625 residues long: MKSDHDIYLFREGTHAKLYNKLGCHLQSNGGANFAVWAPNAESVSVVGDWNYWSGNVDRLDLRDDGSGIWQGFVENAVRGQGYKYRIQSSHGSYGVDKADPFAFYAEPPPATASRVWSLEHDWKDDQWMSSRGPKNALDAPMSIYEIHLGSWRRQDGHFLDYRELAHSLADYVIEMGFTHVELMPVTEHPFYGSWGYQTTGYFAPTSRFGTPQDFMHFVDHLHQRGIGVLLDWVPSHFPTDEHGLGYFDGTHLFEHSDPRQGFHPEWNSSIFNYGRNEVRSFLISSGLFWLDKYHLDGLRVDGVASMLYLDYARKEDEWIPNRHGGRENLEAVDFLQTLNKAVYREYPDTLTIAEESTAWPRVSRPTDMDGLGFGMKWNMGWMHDSLAYMQQEPVHRKYHHHKLTFSLVYAFNENFVLPLSHDEVVHGKGSLLGKMPGDAWQQFANLRALFGYMWAHPGKKLLFMGGEFGQRREWTHDGELEWWVTKLEGHAGLQRYVAQLNRVYRSLPALYQLDFSPAGFEWVEADAADTSVFAFLRKPREHGAPVLIVSNMTPVPRTNYMLGVPLAGFWREVINSDASEFGGSGWGNLGGVEASPVRFHGRPHSVCLTLPPLSTLIFEHVPHA.

Catalysis depends on aspartate 302, which acts as the Nucleophile. Glutamate 355 functions as the Proton donor in the catalytic mechanism.

It belongs to the glycosyl hydrolase 13 family. GlgB subfamily. Monomer.

It carries out the reaction Transfers a segment of a (1-&gt;4)-alpha-D-glucan chain to a primary hydroxy group in a similar glucan chain.. It functions in the pathway glycan biosynthesis; glycogen biosynthesis. Its function is as follows. Catalyzes the formation of the alpha-1,6-glucosidic linkages in glycogen by scission of a 1,4-alpha-linked oligosaccharide from growing alpha-1,4-glucan chains and the subsequent attachment of the oligosaccharide to the alpha-1,6 position. The chain is 1,4-alpha-glucan branching enzyme GlgB from Albidiferax ferrireducens (strain ATCC BAA-621 / DSM 15236 / T118) (Rhodoferax ferrireducens).